Here is a 314-residue protein sequence, read N- to C-terminus: Olfactory receptor 1 (314 aa).

Residues 1 to 29 (MTERNQTVISQFLLLGLPIPPEHQHVFYA) lie on the Extracellular side of the membrane. An N-linked (GlcNAc...) asparagine glycan is attached at asparagine 5. The chain crosses the membrane as a helical span at residues 30–50 (LFLSMYLTTVLGNLIIIILIL). At 51 to 59 (LDSHLHTPM) the chain is on the cytoplasmic side. The chain crosses the membrane as a helical span at residues 60–81 (YLFLSNLSFSDLCFSSVTMPKL). At 82 to 97 (LQNMQSQVPSIPYAGC) the chain is on the extracellular side. Cysteines 97 and 179 form a disulfide. Residues 98–118 (LSQIYFFLFFGDLGNFLLVAM) traverse the membrane as a helical segment. Topologically, residues 119–143 (AYDRYVAICFPLHYMSIMSPKLCVS) are cytoplasmic. The chain crosses the membrane as a helical span at residues 144 to 164 (LVVLSWVLTTFHAMLHTLLMA). Topologically, residues 165-196 (RLSFCEDNVIPHFFCDMSALLKLACSDTRVNE) are extracellular. The chain crosses the membrane as a helical span at residues 197-217 (VVIFIVVSLFLVLPFALIIMS). Residues 218–240 (YVRIVSSILKVPSSQGIYKAFST) lie on the Cytoplasmic side of the membrane. The chain crosses the membrane as a helical span at residues 241 to 261 (CGSHLSVVSLFYGTVIGLYLC). Residues 262 to 271 (PSSNNSTVKE) lie on the Extracellular side of the membrane. N-linked (GlcNAc...) asparagine glycans are attached at residues asparagine 265 and asparagine 266. A helical transmembrane segment spans residues 272-292 (TVMSLMYTVVTPMLNPFIYSL). The Cytoplasmic portion of the chain corresponds to 293–314 (RNRDIKGAMERIFCKRKIQLNL).

Belongs to the G-protein coupled receptor 1 family. In terms of tissue distribution, olfactory epithelium.

The protein localises to the cell membrane. Odorant receptor. Activated by a lily-derived aldehyde as well as other odorants. May signal through an inositol 1,4,5-trisphosphate (IP3) second messenger system. This Rattus norvegicus (Rat) protein is Olfactory receptor 1.